The chain runs to 475 residues: Aspartyl/glutamyl-tRNA(Asn/Gln) amidotransferase subunit B (475 aa).

Belongs to the GatB/GatE family. GatB subfamily. In terms of assembly, heterotrimer of A, B and C subunits.

The enzyme catalyses L-glutamyl-tRNA(Gln) + L-glutamine + ATP + H2O = L-glutaminyl-tRNA(Gln) + L-glutamate + ADP + phosphate + H(+). It carries out the reaction L-aspartyl-tRNA(Asn) + L-glutamine + ATP + H2O = L-asparaginyl-tRNA(Asn) + L-glutamate + ADP + phosphate + 2 H(+). Allows the formation of correctly charged Asn-tRNA(Asn) or Gln-tRNA(Gln) through the transamidation of misacylated Asp-tRNA(Asn) or Glu-tRNA(Gln) in organisms which lack either or both of asparaginyl-tRNA or glutaminyl-tRNA synthetases. The reaction takes place in the presence of glutamine and ATP through an activated phospho-Asp-tRNA(Asn) or phospho-Glu-tRNA(Gln). The chain is Aspartyl/glutamyl-tRNA(Asn/Gln) amidotransferase subunit B from Bacillus thuringiensis subsp. konkukian (strain 97-27).